The sequence spans 406 residues: Phosphorylase b kinase gamma catalytic chain, liver/testis isoform (406 aa).

The region spanning 24-291 (YDPKDVIGRG…AEQALQHPFF (268 aa)) is the Protein kinase domain. ATP is bound by residues 30–38 (IGRGVSSVV) and Lys-53. Asp-153 functions as the Proton acceptor in the catalytic mechanism. Residues 306–330 (QRFRVAVWTVLAAGRVALSTHRVRP) form a calmodulin-binding (domain-N) region. Phosphoserine is present on Ser-345. Residues 346–370 (VRHLIDNCAFRLYGHWVKKGEQQNR) form a calmodulin-binding (domain-C) region.

This sequence belongs to the protein kinase superfamily. CAMK Ser/Thr protein kinase family. Hexadecamer of 4 heterotetramers, each composed of alpha, beta, gamma, and delta subunits. Alpha (PHKA1 or PHKA2) and beta (PHKB) are regulatory subunits, gamma (PHKG1 or PHKG2) is the catalytic subunit, and delta is calmodulin.

It catalyses the reaction 2 ATP + phosphorylase b = 2 ADP + phosphorylase a.. Functionally, catalytic subunit of the phosphorylase b kinase (PHK), which mediates the neural and hormonal regulation of glycogen breakdown (glycogenolysis) by phosphorylating and thereby activating glycogen phosphorylase. May regulate glycogeneolysis in the testis. In vitro, phosphorylates PYGM. The polypeptide is Phosphorylase b kinase gamma catalytic chain, liver/testis isoform (PHKG2) (Homo sapiens (Human)).